The chain runs to 1148 residues: Ice nucleation protein (1148 aa).

3 disordered regions span residues 110–131 (ADPASTSTSTSTSTLTPMPTAI), 222–256 (YGSTQTSGEDSSLTAGYGSTQTAQEGSNLTAGYGS), and 367–394 (GSTQTSGSDSSLTAGYGSTQTAQEGSNL). Low complexity predominate over residues 114–128 (STSTSTSTSTLTPMP). An octapeptide periodicity region spans residues 180–1099 (ATYGSTLSGD…LSAGEDSTLI (920 aa)). A compositionally biased stretch (polar residues) spans 230–250 (EDSSLTAGYGSTQTAQEGSNL).

Belongs to the bacterial ice nucleation protein family.

It localises to the cell outer membrane. In terms of biological role, ice nucleation proteins enable bacteria to nucleate crystallization in supercooled water. In Pseudomonas syringae, this protein is Ice nucleation protein (inaK).